The following is a 59-amino-acid chain: Bdellastasin (59 aa).

5 disulfide bridges follow: cysteine 10-cysteine 21, cysteine 15-cysteine 26, cysteine 28-cysteine 48, cysteine 33-cysteine 52, and cysteine 37-cysteine 54. The region spanning 28-54 (CSDLHCKVKCEHGFKKDDNGCEYACIC) is the Antistasin-like domain.

The protein localises to the secreted. Functionally, strong inhibitor of mammalian trypsin, plasmin and acrosin. This is Bdellastasin from Hirudo medicinalis (Medicinal leech).